The primary structure comprises 74 residues: DNA-directed RNA polymerase subunit omega (74 aa).

The protein belongs to the RNA polymerase subunit omega family. The RNAP catalytic core consists of 2 alpha, 1 beta, 1 beta' and 1 omega subunit. When a sigma factor is associated with the core the holoenzyme is formed, which can initiate transcription.

The enzyme catalyses RNA(n) + a ribonucleoside 5'-triphosphate = RNA(n+1) + diphosphate. Functionally, promotes RNA polymerase assembly. Latches the N- and C-terminal regions of the beta' subunit thereby facilitating its interaction with the beta and alpha subunits. The protein is DNA-directed RNA polymerase subunit omega of Campylobacter jejuni subsp. jejuni serotype O:6 (strain 81116 / NCTC 11828).